A 181-amino-acid chain; its full sequence is MSSAIASRRYAVALLEVAVEGNFLEKVTEDLQKIQEVLSGSHELVLALKSPLINVDLKSKILEEIFRNKVDEKTMVFIKLLAHKKRAALLAGVISEFNALIDERNGVINADVKSAIKLSDEQAKELVNSLSVRTGKKIRAKMRLDENLIGGVTVKIGDTIIDGSISHQLEMLRHSLVAQPA.

This sequence belongs to the ATPase delta chain family. F-type ATPases have 2 components, F(1) - the catalytic core - and F(0) - the membrane proton channel. F(1) has five subunits: alpha(3), beta(3), gamma(1), delta(1), epsilon(1). F(0) has three main subunits: a(1), b(2) and c(10-14). The alpha and beta chains form an alternating ring which encloses part of the gamma chain. F(1) is attached to F(0) by a central stalk formed by the gamma and epsilon chains, while a peripheral stalk is formed by the delta and b chains.

Its subcellular location is the cell inner membrane. Functionally, f(1)F(0) ATP synthase produces ATP from ADP in the presence of a proton or sodium gradient. F-type ATPases consist of two structural domains, F(1) containing the extramembraneous catalytic core and F(0) containing the membrane proton channel, linked together by a central stalk and a peripheral stalk. During catalysis, ATP synthesis in the catalytic domain of F(1) is coupled via a rotary mechanism of the central stalk subunits to proton translocation. Its function is as follows. This protein is part of the stalk that links CF(0) to CF(1). It either transmits conformational changes from CF(0) to CF(1) or is implicated in proton conduction. This chain is ATP synthase subunit delta, found in Chlorobaculum tepidum (strain ATCC 49652 / DSM 12025 / NBRC 103806 / TLS) (Chlorobium tepidum).